We begin with the raw amino-acid sequence, 107 residues long: Nucleoid-associated protein RC1337 (107 aa).

It belongs to the YbaB/EbfC family. In terms of assembly, homodimer.

The protein localises to the cytoplasm. It localises to the nucleoid. Functionally, binds to DNA and alters its conformation. May be involved in regulation of gene expression, nucleoid organization and DNA protection. This is Nucleoid-associated protein RC1337 from Rickettsia conorii (strain ATCC VR-613 / Malish 7).